The chain runs to 293 residues: 33 kDa chaperonin (293 aa).

Cystine bridges form between cysteine 231–cysteine 233 and cysteine 264–cysteine 267.

The protein belongs to the HSP33 family. Under oxidizing conditions two disulfide bonds are formed involving the reactive cysteines. Under reducing conditions zinc is bound to the reactive cysteines and the protein is inactive.

The protein resides in the cytoplasm. Its function is as follows. Redox regulated molecular chaperone. Protects both thermally unfolding and oxidatively damaged proteins from irreversible aggregation. Plays an important role in the bacterial defense system toward oxidative stress. In Yersinia pseudotuberculosis serotype O:1b (strain IP 31758), this protein is 33 kDa chaperonin.